The primary structure comprises 279 residues: Energy-coupling factor transporter ATP-binding protein EcfA1 (279 aa).

The 236-residue stretch at 5–240 (ITVNNLFFKY…GNRLISLGLD (236 aa)) folds into the ABC transporter domain. Residue 40–47 (GHNGSGKS) participates in ATP binding.

It belongs to the ABC transporter superfamily. Energy-coupling factor EcfA family. In terms of assembly, forms a stable energy-coupling factor (ECF) transporter complex composed of 2 membrane-embedded substrate-binding proteins (S component), 2 ATP-binding proteins (A component) and 2 transmembrane proteins (T component).

The protein resides in the cell membrane. In terms of biological role, ATP-binding (A) component of a common energy-coupling factor (ECF) ABC-transporter complex. Unlike classic ABC transporters this ECF transporter provides the energy necessary to transport a number of different substrates. This chain is Energy-coupling factor transporter ATP-binding protein EcfA1, found in Streptococcus agalactiae serotype Ia (strain ATCC 27591 / A909 / CDC SS700).